A 164-amino-acid polypeptide reads, in one-letter code: MSQSICSTGLRWLWLVVVVLIIDLGSKYLILQNFALGDTVPLFPSLNLHYARNYGAAFSFLADSGGWQRWFFAGIAIGISVLLAVMMYRSKATQKLNNIAYALIIGGALGNLFDRLWHGFVVDMIDFYVGDWHFATFNLADTAICVGAALIVLEGFLPSKAKKQ.

Helical transmembrane passes span Trp12–Gln32, Trp70–Ser90, and Ala102–Val122. Active-site residues include Asp123 and Asp141. The chain crosses the membrane as a helical span at residues Phe137–Leu157.

This sequence belongs to the peptidase A8 family.

The protein localises to the cell inner membrane. It catalyses the reaction Release of signal peptides from bacterial membrane prolipoproteins. Hydrolyzes -Xaa-Yaa-Zaa-|-(S,diacylglyceryl)Cys-, in which Xaa is hydrophobic (preferably Leu), and Yaa (Ala or Ser) and Zaa (Gly or Ala) have small, neutral side chains.. It participates in protein modification; lipoprotein biosynthesis (signal peptide cleavage). Functionally, this protein specifically catalyzes the removal of signal peptides from prolipoproteins. The sequence is that of Lipoprotein signal peptidase from Shigella flexneri.